Here is an 88-residue protein sequence, read N- to C-terminus: U13-theraphotoxin-Cg1a (88 aa).

An N-terminal signal peptide occupies residues 1 to 21 (MKVSVLITLAVLGVMFVWASA). A propeptide spanning residues 22 to 52 (AELEQSGSDQKDSDSPAWLKSMERIFQSEER) is cleaved from the precursor. 3 cysteine pairs are disulfide-bonded: Cys54/Cys68, Cys61/Cys73, and Cys67/Cys80.

The protein belongs to the neurotoxin 10 (Hwtx-1) family. 41 (Jztx-36) subfamily. As to expression, expressed by the venom gland.

The protein resides in the secreted. In terms of biological role, probable ion channel inhibitor. The chain is U13-theraphotoxin-Cg1a from Chilobrachys guangxiensis (Chinese earth tiger tarantula).